The following is a 311-amino-acid chain: Olfactory receptor 10D1B (311 aa).

The Extracellular portion of the chain corresponds to 1–24; the sequence is MKNLSVVTQFILLGIPHTEGVETM. A helical membrane pass occupies residues 25-45; that stretch reads LFVLFFSFYIFTLVGNLLILL. At 46–54 the chain is on the cytoplasmic side; that stretch reads AIVSSSRLH. A helical membrane pass occupies residues 55–75; sequence TPMYFFLCQLSVCDIFFPSVS. Residues 76–95 are Extracellular-facing; sequence SPKMLFYLSGNTPAISYAGC. Residues Cys-95 and Cys-187 are joined by a disulfide bond. The chain crosses the membrane as a helical span at residues 96–116; the sequence is VSQLFFYHFLGGTECFLYTVM. Over 117 to 137 the chain is Cytoplasmic; that stretch reads AYDRFVAICYPLRYSVIMSHR. A helical membrane pass occupies residues 138 to 158; that stretch reads ICAFLAMGTAVFGCIHSTFLT. Residues 159-192 are Extracellular-facing; the sequence is TLTFQLPYCGPKDVNYYFCDIPVVMKLACADTST. The chain crosses the membrane as a helical span at residues 193–213; it reads LEMVGFISVGLMPLSCFFFIL. The Cytoplasmic portion of the chain corresponds to 214–237; the sequence is TSYSCIVRSILQIRSTEGRHRAFS. The chain crosses the membrane as a helical span at residues 238-258; it reads TCSAHFTAILLFYMPVIFIYL. The Extracellular segment spans residues 259–271; the sequence is RPTPSPWLDATVQ. Residues 272 to 288 traverse the membrane as a helical segment; sequence ILNNLVTPMLNPLIYSL. The Cytoplasmic portion of the chain corresponds to 289-311; sequence RNKEVKSSLWTVLHLLCFLPKHL.

It belongs to the G-protein coupled receptor 1 family.

It is found in the cell membrane. Functionally, odorant receptor. The protein is Olfactory receptor 10D1B of Mus musculus (Mouse).